The sequence spans 243 residues: Small ribosomal subunit protein uS3 (243 aa).

Positions 22–93 (LNEFLTRELA…SVELYAEKVA (72 aa)) constitute a KH type-2 domain. Residues 195-243 (QQGKNGPKKPQPDHILVTEPKDEPAPLEPTSDIRSLAPAPLPQPVAAVA) form a disordered region.

It belongs to the universal ribosomal protein uS3 family.

This Manduca sexta (Tobacco hawkmoth) protein is Small ribosomal subunit protein uS3 (RpS3).